A 619-amino-acid polypeptide reads, in one-letter code: DNA polymerase II small subunit (619 aa).

The tract at residues 78–122 is disordered; that stretch reads EEAEKTVESQETRASELEEGGVSQVSSGELQELKEESPEISTTEE. Basic and acidic residues predominate over residues 79-93; it reads EAEKTVESQETRASE.

The protein belongs to the DNA polymerase delta/II small subunit family. In terms of assembly, heterodimer of a large subunit and a small subunit.

It carries out the reaction DNA(n) + a 2'-deoxyribonucleoside 5'-triphosphate = DNA(n+1) + diphosphate. The enzyme catalyses Exonucleolytic cleavage in the 3'- to 5'-direction to yield nucleoside 5'-phosphates.. Possesses two activities: a DNA synthesis (polymerase) and an exonucleolytic activity that degrades single-stranded DNA in the 3' to 5' direction. Has a template-primer preference which is characteristic of a replicative DNA polymerase. The chain is DNA polymerase II small subunit (polB) from Pyrococcus abyssi (strain GE5 / Orsay).